The chain runs to 285 residues: Mitochondrial substrate carrier family protein S (285 aa).

Residues 1–9 lie on the Mitochondrial intermembrane side of the membrane; sequence MSTERGLKD. Solcar repeat units lie at residues 4-87, 96-183, and 197-283; these read ERGL…MKVL, LTVG…CKRY, and LNLP…VIKL. The helical transmembrane segment at 10–30 threads the bilayer; sequence SIAGTVAGAACLFTGHPFDTI. Residues 31–61 are Mitochondrial matrix-facing; that stretch reads RVRLQTSNTPIGIMECFRNTIKYEGFSGLYK. The helical transmembrane segment at 62–82 threads the bilayer; it reads GVTSPLFGMMFETAVLFAGYG. Residues 83–101 lie on the Mitochondrial intermembrane side of the membrane; that stretch reads QMKVLLQKDENTPLTVGQC. A helical membrane pass occupies residues 102 to 122; that stretch reads AIAGGFAGVGASVVLTPVELV. Residues 123 to 150 are Mitochondrial matrix-facing; it reads KCRLQVQTTGPQKYKGSLDCLVQILKEG. Residues 151-172 traverse the membrane as a helical segment; sequence GIRGAYRGFTPTIAREFVGNMA. Residues 173–199 lie on the Mitochondrial intermembrane side of the membrane; that stretch reads FFSTYETCKRYFKNKENKPNDDDELNL. Residues 200–220 traverse the membrane as a helical segment; that stretch reads PALIISGGLGGMAYWTVLYPV. At 221 to 258 the chain is on the mitochondrial matrix side; that stretch reads DVAKSKIQISEGAGPSPSIVKVLKEIYSKEGVKGLFRG. Residues 259-277 traverse the membrane as a helical segment; sequence YTPTIIRSFPANAAMFSVY. Over 278-285 the chain is Mitochondrial intermembrane; it reads ELVIKLLG.

This sequence belongs to the mitochondrial carrier (TC 2.A.29) family.

It localises to the mitochondrion inner membrane. In terms of biological role, mitochondrial solute carriers shuttle metabolites, nucleotides, and cofactors through the mitochondrial inner membrane. Mediates the transport of acylcarnitines of different length across the mitochondrial inner membrane from the cytosol to the mitochondrial matrix for their oxidation by the mitochondrial fatty acid-oxidation pathway. The sequence is that of Mitochondrial substrate carrier family protein S (mcfS) from Dictyostelium discoideum (Social amoeba).